The following is a 155-amino-acid chain: Probable Brix domain-containing ribosomal biogenesis protein (155 aa).

The Brix domain occupies 1–155 (MLITSSRKPS…KNYRKMVMSE (155 aa)).

In terms of biological role, probably involved in the biogenesis of the ribosome. This chain is Probable Brix domain-containing ribosomal biogenesis protein, found in Methanococcoides burtonii (strain DSM 6242 / NBRC 107633 / OCM 468 / ACE-M).